A 1141-amino-acid polypeptide reads, in one-letter code: Sterol regulatory element-binding protein 2 (1141 aa).

The transcriptional activation (acidic) stretch occupies residues 1 to 50 (MDDSGELGGLETMETLTELGDELTLGDIDEMLQFVSNQVGEFPDLFSEQL). At 1–479 (MDDSGELGGL…PPVALGMVDR (479 aa)) the chain is on the cytoplasmic side. The segment at 48 to 144 (EQLCSSFPGS…PQPQPQPQTQ (97 aa)) is disordered. A compositionally biased stretch (low complexity) spans 63 to 82 (SSGSSGSSSSSSNGRGSSSG). Residues 88–97 (VQRSFTQVTL) are compositionally biased toward polar residues. Positions 98–110 (PSFSPSAASPQAP) are enriched in low complexity. Over residues 114 to 126 (VKVSPTSVPTTPR) the composition is skewed to polar residues. The interaction with LMNA stretch occupies residues 237 to 491 (QQVPVLVQPQ…ILLCVLTFLC (255 aa)). Residues 330-380 (ERRTTHNIIEKRYRSSINDKIIELKDLVMGTDAKMHKSGVLRKAIDYIKYL) form the bHLH domain. Residues 380–401 (LQQVNHKLRQENMVLKLANQKN) are leucine-zipper. Lys-464 participates in a covalent cross-link: Glycyl lysine isopeptide (Lys-Gly) (interchain with G-Cter in SUMO2). Residues 480 to 500 (SRILLCVLTFLCLSFNPLTSL) form a helical membrane-spanning segment. At 501–533 (LQWGGAHDSDQHPHSGSGRSVLSFESGSGGWFD) the chain is on the lumenal side. Residues 534–554 (WMMPTLLLWLVNGVIVLSVFV) traverse the membrane as a helical segment. The Cytoplasmic portion of the chain corresponds to 555-1139 (KLLVHGEPVI…VKLGGGTAIA (585 aa)). Ser-855 and Ser-1098 each carry phosphoserine.

Belongs to the SREBP family. In terms of assembly, forms a tight complex with SCAP, the SCAP-SREBP complex, in the endoplasmic reticulum membrane and the Golgi apparatus. Interacts with PAQR3; the interaction anchors the SCAP-SREBP complex to the Golgi apparatus in low cholesterol conditions. Interacts (via C-terminal domain) with RNF139. Homodimer; efficient DNA binding of the soluble transcription factor fragment requires dimerization with another bHLH protein. Interacts with LMNA. In terms of processing, processed in the Golgi apparatus, releasing the protein from the membrane. At low cholesterol the SCAP-SREBP complex is recruited into COPII vesicles for export from the endoplasmic reticulum. In the Golgi, complex SREBPs are cleaved sequentially by site-1 (MBTPS1, S1P) and site-2 (MBTPS2, S2P) protease. The first cleavage by site-1 protease occurs within the luminal loop, the second cleavage by site-2 protease occurs within the first transmembrane domain, releasing the transcription factor from the Golgi membrane. Apoptosis triggers cleavage by the cysteine proteases caspase-3 and caspase-7. Cleavage and activation is induced by mediated cholesterol efflux. Post-translationally, phosphorylated by AMPK, leading to suppress protein processing and nuclear translocation, and repress target gene expression. SCAP-free SREBF2 is ubiquitinated by the BCR(ARMC5) complex, leading to its degradation. In terms of processing, ubiquitinated; the nuclear form has a rapid turnover and is rapidly ubiquitinated and degraded by the proteasome in the nucleus. As to expression, ubiquitously expressed in adult and fetal tissues.

The protein resides in the endoplasmic reticulum membrane. It is found in the golgi apparatus membrane. Its subcellular location is the cytoplasmic vesicle. It localises to the COPII-coated vesicle membrane. The protein localises to the nucleus. With respect to regulation, activation by cleavage is down-regulated upon activation of SIRT3-dependent PRKAA1/AMPK-alpha signaling cascade which leads to inhibition of ATP-consuming lipogenesis to restore cellular energy balance. Functionally, precursor of the transcription factor form (Processed sterol regulatory element-binding protein 2), which is embedded in the endoplasmic reticulum membrane. Low sterol concentrations promote processing of this form, releasing the transcription factor form that translocates into the nucleus and activates transcription of genes involved in cholesterol biosynthesis. Key transcription factor that regulates expression of genes involved in cholesterol biosynthesis. Binds to the sterol regulatory element 1 (SRE-1) (5'-ATCACCCCAC-3'). Has dual sequence specificity binding to both an E-box motif (5'-ATCACGTGA-3') and to SRE-1 (5'-ATCACCCCAC-3'). Regulates transcription of genes related to cholesterol synthesis pathway. In Homo sapiens (Human), this protein is Sterol regulatory element-binding protein 2.